A 305-amino-acid chain; its full sequence is UDP-3-O-acyl-N-acetylglucosamine deacetylase (305 aa).

Residues histidine 78, histidine 237, and aspartate 241 each contribute to the Zn(2+) site. Histidine 264 serves as the catalytic Proton donor.

The protein belongs to the LpxC family. Requires Zn(2+) as cofactor.

It catalyses the reaction a UDP-3-O-[(3R)-3-hydroxyacyl]-N-acetyl-alpha-D-glucosamine + H2O = a UDP-3-O-[(3R)-3-hydroxyacyl]-alpha-D-glucosamine + acetate. It participates in glycolipid biosynthesis; lipid IV(A) biosynthesis; lipid IV(A) from (3R)-3-hydroxytetradecanoyl-[acyl-carrier-protein] and UDP-N-acetyl-alpha-D-glucosamine: step 2/6. Its function is as follows. Catalyzes the hydrolysis of UDP-3-O-myristoyl-N-acetylglucosamine to form UDP-3-O-myristoylglucosamine and acetate, the committed step in lipid A biosynthesis. The chain is UDP-3-O-acyl-N-acetylglucosamine deacetylase from Burkholderia ambifaria (strain ATCC BAA-244 / DSM 16087 / CCUG 44356 / LMG 19182 / AMMD) (Burkholderia cepacia (strain AMMD)).